The primary structure comprises 271 residues: Tritrans,polycis-undecaprenyl-diphosphate synthase (geranylgeranyl-diphosphate specific) (271 aa).

Asp-50 is an active-site residue. Asp-50 is a Mg(2+) binding site. Substrate is bound by residues Gly-51–Arg-54, Phe-55, His-67, and Ser-95–Glu-97. The active-site Proton acceptor is Asn-98. Residues Arg-101, Arg-220, and Arg-226–Ser-228 each bind substrate. Glu-239 is a Mg(2+) binding site.

It belongs to the UPP synthase family. In terms of assembly, homodimer. The cofactor is Mg(2+).

It catalyses the reaction geranylgeranyl diphosphate + 7 isopentenyl diphosphate = tri-trans,hepta-cis-undecaprenyl diphosphate + 7 diphosphate. Functionally, catalyzes the sequential condensation of isopentenyl diphosphate (IPP) with geranylgeranyl diphosphate (GGPP) to yield (2Z,6Z,10Z,14Z,18Z,22Z,26Z,30E,34E,38E)-undecaprenyl diphosphate (tritrans,heptacis-UPP). It is probably the precursor of glycosyl carrier lipids. The protein is Tritrans,polycis-undecaprenyl-diphosphate synthase (geranylgeranyl-diphosphate specific) of Methanopyrus kandleri (strain AV19 / DSM 6324 / JCM 9639 / NBRC 100938).